We begin with the raw amino-acid sequence, 239 residues long: Phosphothreonine lyase OspF (239 aa).

Histidine 104 serves as the catalytic Proton donor. The Proton acceptor role is filled by lysine 134.

It belongs to the phosphothreonine lyase family.

It is found in the secreted. Functionally, catalyzes the removal of the phosphate group from the phosphothreonine in the mitogen-activated protein kinases p38, phosphothreonine in the mitogen-activated protein kinases such as MAPK2/ERK2, MAPK3/ERK1, MAPK8 and MAPK14 in an irreversible reaction, thus preventing the downstream phosphorylation of histone H3. This epigenetic modification results in inhibition of the transcription of a specific subset of pro-inflammatory genes, and ultimately to a reduced immune response against the invading pathogen. The diminished immune response enhances the bacterium's ability to disseminate and multiply within the host. This is Phosphothreonine lyase OspF (ospF) from Shigella boydii serotype 4 (strain Sb227).